Here is a 395-residue protein sequence, read N- to C-terminus: Imidazolonepropionase (395 aa).

2 residues coordinate Fe(3+): His72 and His74. Positions 72 and 74 each coordinate Zn(2+). Residues Arg81, Tyr144, and His174 each contribute to the 4-imidazolone-5-propanoate site. Tyr144 lines the N-formimidoyl-L-glutamate pocket. His231 is a binding site for Fe(3+). His231 is a Zn(2+) binding site. A 4-imidazolone-5-propanoate-binding site is contributed by Glu234. Asp306 is a binding site for Fe(3+). Asp306 serves as a coordination point for Zn(2+).

It belongs to the metallo-dependent hydrolases superfamily. HutI family. The cofactor is Zn(2+). It depends on Fe(3+) as a cofactor.

It localises to the cytoplasm. The catalysed reaction is 4-imidazolone-5-propanoate + H2O = N-formimidoyl-L-glutamate. It functions in the pathway amino-acid degradation; L-histidine degradation into L-glutamate; N-formimidoyl-L-glutamate from L-histidine: step 3/3. Catalyzes the hydrolytic cleavage of the carbon-nitrogen bond in imidazolone-5-propanoate to yield N-formimidoyl-L-glutamate. It is the third step in the universal histidine degradation pathway. This is Imidazolonepropionase from Pyrobaculum arsenaticum (strain DSM 13514 / JCM 11321 / PZ6).